The following is a 265-amino-acid chain: Transcriptional repressor DcmR (265 aa).

Residues leucine 17 to tryptophan 36 constitute a DNA-binding region (H-T-H motif).

In terms of assembly, monomer.

Transcriptional repressor of the dcmA gene and of its own gene. In Methylorubrum extorquens (strain DSM 6343 / CIP 106787 / DM4) (Methylobacterium extorquens), this protein is Transcriptional repressor DcmR (dcmR).